Here is a 251-residue protein sequence, read N- to C-terminus: Pyrroloquinoline-quinone synthase (251 aa).

It belongs to the PqqC family.

The catalysed reaction is 6-(2-amino-2-carboxyethyl)-7,8-dioxo-1,2,3,4,7,8-hexahydroquinoline-2,4-dicarboxylate + 3 O2 = pyrroloquinoline quinone + 2 H2O2 + 2 H2O + H(+). Its pathway is cofactor biosynthesis; pyrroloquinoline quinone biosynthesis. Functionally, ring cyclization and eight-electron oxidation of 3a-(2-amino-2-carboxyethyl)-4,5-dioxo-4,5,6,7,8,9-hexahydroquinoline-7,9-dicarboxylic-acid to PQQ. This Pseudomonas putida (strain W619) protein is Pyrroloquinoline-quinone synthase.